We begin with the raw amino-acid sequence, 621 residues long: Putative zinc metalloprotease CPn_0344/CP_0416/CPj0344/CpB0350 (621 aa).

Residue histidine 20 coordinates Zn(2+). Glutamate 21 is an active-site residue. Histidine 24 serves as a coordination point for Zn(2+). The next 3 membrane-spanning stretches (helical) occupy residues 103-125 (ILVL…SILY), 561-583 (VLNL…WEIV), and 596-613 (ILVP…FLTF).

The protein belongs to the peptidase M50B family. The cofactor is Zn(2+).

Its subcellular location is the cell inner membrane. The chain is Putative zinc metalloprotease CPn_0344/CP_0416/CPj0344/CpB0350 from Chlamydia pneumoniae (Chlamydophila pneumoniae).